The primary structure comprises 394 residues: Protein BUR2 (394 aa).

Disordered stretches follow at residues 1–32 and 372–394; these read MVLSASEEIANSQPSGNGKTSLDIKQNEGNPQ and MSERSIKRPSEPPAEQATKKPRF. Over residues 9-32 the composition is skewed to polar residues; the sequence is IANSQPSGNGKTSLDIKQNEGNPQ. The span at 372 to 381 shows a compositional bias: basic and acidic residues; the sequence is MSERSIKRPS.

In terms of assembly, belongs to the BUR kinase complex.

It localises to the nucleus. Functionally, component of the BUR kinase complex involved in transcription regulation. This complex phosphorylates the UBC2/RAD6 ubiquitin-conjugating enzyme (E2), leading to monoubiquitination of histone H2B and the silencing of telomeric-associated genes. Also required for histone H3 methylation. Necessary for the recovery from pheromone-induced growth arrest in the cell cycle G1 phase. The kinase activity of the complex requires the presence of BUR2. Overexpression of BUR2 interferes with mitotic chromosome segregation. The polypeptide is Protein BUR2 (BUR2) (Kluyveromyces lactis (strain ATCC 8585 / CBS 2359 / DSM 70799 / NBRC 1267 / NRRL Y-1140 / WM37) (Yeast)).